The following is a 247-amino-acid chain: Type III pantothenate kinase (247 aa).

6-13 contributes to the ATP binding site; sequence DVGNTSIY. 102–105 contacts substrate; that stretch reads GADL. Aspartate 104 functions as the Proton acceptor in the catalytic mechanism. Residue aspartate 122 participates in K(+) binding. Threonine 125 contacts ATP. Threonine 176 is a binding site for substrate.

The protein belongs to the type III pantothenate kinase family. As to quaternary structure, homodimer. Requires NH4(+) as cofactor. The cofactor is K(+).

Its subcellular location is the cytoplasm. The catalysed reaction is (R)-pantothenate + ATP = (R)-4'-phosphopantothenate + ADP + H(+). Its pathway is cofactor biosynthesis; coenzyme A biosynthesis; CoA from (R)-pantothenate: step 1/5. Its function is as follows. Catalyzes the phosphorylation of pantothenate (Pan), the first step in CoA biosynthesis. The protein is Type III pantothenate kinase of Acholeplasma laidlawii (strain PG-8A).